An 86-amino-acid polypeptide reads, in one-letter code: MAQKKGGGSTRNGRDSESKRLGVKVYGGQAINAGGIIVRQRGTRTHAGVNVGMGKDHTLFALVDGHVKFANRGEGKKQFVDVVPAA.

Over residues 1–10 (MAQKKGGGST) the composition is skewed to gly residues. Residues 1–21 (MAQKKGGGSTRNGRDSESKRL) form a disordered region.

It belongs to the bacterial ribosomal protein bL27 family.

The chain is Large ribosomal subunit protein bL27 from Ralstonia pickettii (strain 12J).